The chain runs to 366 residues: UDP-N-acetylglucosamine--N-acetylmuramyl-(pentapeptide) pyrophosphoryl-undecaprenol N-acetylglucosamine transferase (366 aa).

Residues Thr14–Gly16, Asn125, Arg168, Ser196, and Gln297 each bind UDP-N-acetyl-alpha-D-glucosamine.

The protein belongs to the glycosyltransferase 28 family. MurG subfamily.

Its subcellular location is the cell inner membrane. The enzyme catalyses di-trans,octa-cis-undecaprenyl diphospho-N-acetyl-alpha-D-muramoyl-L-alanyl-D-glutamyl-meso-2,6-diaminopimeloyl-D-alanyl-D-alanine + UDP-N-acetyl-alpha-D-glucosamine = di-trans,octa-cis-undecaprenyl diphospho-[N-acetyl-alpha-D-glucosaminyl-(1-&gt;4)]-N-acetyl-alpha-D-muramoyl-L-alanyl-D-glutamyl-meso-2,6-diaminopimeloyl-D-alanyl-D-alanine + UDP + H(+). It participates in cell wall biogenesis; peptidoglycan biosynthesis. Cell wall formation. Catalyzes the transfer of a GlcNAc subunit on undecaprenyl-pyrophosphoryl-MurNAc-pentapeptide (lipid intermediate I) to form undecaprenyl-pyrophosphoryl-MurNAc-(pentapeptide)GlcNAc (lipid intermediate II). The protein is UDP-N-acetylglucosamine--N-acetylmuramyl-(pentapeptide) pyrophosphoryl-undecaprenol N-acetylglucosamine transferase of Rhodopseudomonas palustris (strain ATCC BAA-98 / CGA009).